Here is a 284-residue protein sequence, read N- to C-terminus: Bifunctional protein FolD (284 aa).

NADP(+)-binding positions include 164 to 166 and I230; that span reads GTS.

The protein belongs to the tetrahydrofolate dehydrogenase/cyclohydrolase family. Homodimer.

It catalyses the reaction (6R)-5,10-methylene-5,6,7,8-tetrahydrofolate + NADP(+) = (6R)-5,10-methenyltetrahydrofolate + NADPH. The catalysed reaction is (6R)-5,10-methenyltetrahydrofolate + H2O = (6R)-10-formyltetrahydrofolate + H(+). The protein operates within one-carbon metabolism; tetrahydrofolate interconversion. Functionally, catalyzes the oxidation of 5,10-methylenetetrahydrofolate to 5,10-methenyltetrahydrofolate and then the hydrolysis of 5,10-methenyltetrahydrofolate to 10-formyltetrahydrofolate. The chain is Bifunctional protein FolD from Mycoplasma capricolum subsp. capricolum (strain California kid / ATCC 27343 / NCTC 10154).